A 555-amino-acid chain; its full sequence is Arginine--tRNA ligase (555 aa).

The short motif at 117 to 127 (ANPNGPLHVGH) is the 'HIGH' region element.

The protein belongs to the class-I aminoacyl-tRNA synthetase family.

It is found in the cytoplasm. The catalysed reaction is tRNA(Arg) + L-arginine + ATP = L-arginyl-tRNA(Arg) + AMP + diphosphate. The chain is Arginine--tRNA ligase from Methanospirillum hungatei JF-1 (strain ATCC 27890 / DSM 864 / NBRC 100397 / JF-1).